Here is a 331-residue protein sequence, read N- to C-terminus: Biotin synthase (331 aa).

The Radical SAM core domain maps to 52 to 277 (PDVEVEGIIS…RTMLRFAGGR (226 aa)). The [4Fe-4S] cluster site is built by Cys67, Cys71, and Cys74. Residues Cys110, Cys143, Cys202, and Arg272 each contribute to the [2Fe-2S] cluster site.

The protein belongs to the radical SAM superfamily. Biotin synthase family. Homodimer. [4Fe-4S] cluster serves as cofactor. [2Fe-2S] cluster is required as a cofactor.

The enzyme catalyses (4R,5S)-dethiobiotin + (sulfur carrier)-SH + 2 reduced [2Fe-2S]-[ferredoxin] + 2 S-adenosyl-L-methionine = (sulfur carrier)-H + biotin + 2 5'-deoxyadenosine + 2 L-methionine + 2 oxidized [2Fe-2S]-[ferredoxin]. It functions in the pathway cofactor biosynthesis; biotin biosynthesis; biotin from 7,8-diaminononanoate: step 2/2. Its function is as follows. Catalyzes the conversion of dethiobiotin (DTB) to biotin by the insertion of a sulfur atom into dethiobiotin via a radical-based mechanism. The polypeptide is Biotin synthase (Mycobacterium sp. (strain JLS)).